Reading from the N-terminus, the 243-residue chain is MSADHDHDHDHDHDHKPAPMVEEVSDFEILEMAVRELAIEKGLFSAEDHRVWKDYVHTLGPLPAARLVAKAWLDPEYKKLCIEDGVEASKAVGVNWVTSPPTQFGTPSDYCNLRVLADSPTLKHVVVCTLCSCYPRPILGQSPEWYRSPNYRRRLVRWPRQVLAEFGLQLPSEVQIRVADSNQKTRYIVMPVRPEGTDGWTEDQLAEIVTRDCLIGVAVPKPGITVNAKRPVLKANRPVHHDH.

The Co(3+) site is built by C128, C131, S132, and C133. C131 carries the cysteine sulfinic acid (-SO2H) modification. C133 carries the post-translational modification Cysteine sulfenic acid (-SOH).

Belongs to the nitrile hydratase subunit alpha family. Heterododecamer consisting of 4 alpha, 4 beta, and 4 gamma subunits. It depends on Co(3+) as a cofactor.

The enzyme catalyses thiocyanate + H2O + 2 H(+) = carbonyl sulfide + NH4(+). Its pathway is organosulfur degradation; thiocyanate degradation. Functionally, involved in the degradation of thiocyanate. The chain is Thiocyanate hydrolase subunit gamma (scnC) from Thiobacillus thioparus.